A 171-amino-acid chain; its full sequence is Small ribosomal subunit protein mS25 (171 aa).

The protein belongs to the mitochondrion-specific ribosomal protein mS25 family. In terms of assembly, component of the mitochondrial ribosome small subunit (28S) which comprises a 12S rRNA and about 30 distinct proteins.

It is found in the mitochondrion. This Mus musculus (Mouse) protein is Small ribosomal subunit protein mS25 (Mrps25).